Here is a 135-residue protein sequence, read N- to C-terminus: Large-conductance mechanosensitive channel (135 aa).

The next 2 helical transmembrane spans lie at 10–30 and 76–96; these read FAMRGNVIDMAVGVVIGGAFG and GSFIQTMVDFLIIAFCIFCVI.

This sequence belongs to the MscL family. In terms of assembly, homopentamer.

It localises to the cell inner membrane. Functionally, channel that opens in response to stretch forces in the membrane lipid bilayer. May participate in the regulation of osmotic pressure changes within the cell. This chain is Large-conductance mechanosensitive channel, found in Campylobacter concisus (strain 13826).